A 247-amino-acid chain; its full sequence is ATP synthase subunit a, chloroplastic (247 aa).

5 helical membrane passes run 38-58 (QVLI…TVAV), 95-115 (VPFI…GALL), 134-154 (INTT…AGLT), 199-219 (LVVV…VMFL), and 220-240 (GLFT…AYIG).

This sequence belongs to the ATPase A chain family. As to quaternary structure, F-type ATPases have 2 components, CF(1) - the catalytic core - and CF(0) - the membrane proton channel. CF(1) has five subunits: alpha(3), beta(3), gamma(1), delta(1), epsilon(1). CF(0) has four main subunits: a, b, b' and c.

The protein resides in the plastid. The protein localises to the chloroplast thylakoid membrane. In terms of biological role, key component of the proton channel; it plays a direct role in the translocation of protons across the membrane. The chain is ATP synthase subunit a, chloroplastic from Acorus calamus var. americanus (American sweet flag).